We begin with the raw amino-acid sequence, 143 residues long: Peptide methionine sulfoxide reductase MsrB (143 aa).

Positions Asp16–Arg139 constitute a MsrB domain. Residues Cys55, Cys58, Cys104, and Cys107 each coordinate Zn(2+). Cys128 acts as the Nucleophile in catalysis.

It belongs to the MsrB Met sulfoxide reductase family. Requires Zn(2+) as cofactor.

The catalysed reaction is L-methionyl-[protein] + [thioredoxin]-disulfide + H2O = L-methionyl-(R)-S-oxide-[protein] + [thioredoxin]-dithiol. The chain is Peptide methionine sulfoxide reductase MsrB from Burkholderia vietnamiensis (strain G4 / LMG 22486) (Burkholderia cepacia (strain R1808)).